The sequence spans 566 residues: Bicarbonate transporter BicA (566 aa).

Topologically, residues M1–D15 are cytoplasmic. Residues I16–A36 form a helical membrane-spanning segment. The Periplasmic segment spans residues S37–E42. The helical transmembrane segment at A43–T63 threads the bilayer. Residue L64 is a topological domain, cytoplasmic. A helical membrane pass occupies residues I65 to A85. T69 provides a ligand contact to hydrogencarbonate. At S86 to G93 the chain is on the periplasmic side. The chain crosses the membrane as a helical span at residues L94–L114. The Cytoplasmic portion of the chain corresponds to K115–T126. A helical transmembrane segment spans residues V127–F147. Over L148–S169 the chain is Periplasmic. The helical transmembrane segment at N170–P190 threads the bilayer. The Cytoplasmic portion of the chain corresponds to E191–V196. A helical transmembrane segment spans residues I197 to P217. Residues E218–R247 are Periplasmic-facing. A helical transmembrane segment spans residues M248–V268. D262, T266, and G304 together coordinate Na(+). The Cytoplasmic segment spans residues V269–R318. A305 is a binding site for hydrogencarbonate. T306 lines the Na(+) pocket. Residues T319–S339 traverse the membrane as a helical segment. L340 is a topological domain (periplasmic). The chain crosses the membrane as a helical span at residues T341–I361. Over D362–E371 the chain is Cytoplasmic. The helical transmembrane segment at I372 to L392 threads the bilayer. Residue I393 is a topological domain, periplasmic. Residues V394–L414 form a helical membrane-spanning segment. Topologically, residues Q415–G566 are cytoplasmic. In terms of domain architecture, STAS spans K436–A546.

The protein belongs to the SLC26A/SulP transporter (TC 2.A.53) family.

Its subcellular location is the cell inner membrane. In terms of biological role, low/medium affinity, Na(+)-dependent bicarbonate transporter. This Picosynechococcus sp. (strain ATCC 27264 / PCC 7002 / PR-6) (Agmenellum quadruplicatum) protein is Bicarbonate transporter BicA (bicA).